Reading from the N-terminus, the 301-residue chain is Ribosomal RNA small subunit methyltransferase H (301 aa).

Residues 33–35, D52, F79, D100, and Q107 each bind S-adenosyl-L-methionine; that span reads GGH.

This sequence belongs to the methyltransferase superfamily. RsmH family.

Its subcellular location is the cytoplasm. The catalysed reaction is cytidine(1402) in 16S rRNA + S-adenosyl-L-methionine = N(4)-methylcytidine(1402) in 16S rRNA + S-adenosyl-L-homocysteine + H(+). Its function is as follows. Specifically methylates the N4 position of cytidine in position 1402 (C1402) of 16S rRNA. This Mycoplasmopsis synoviae (strain 53) (Mycoplasma synoviae) protein is Ribosomal RNA small subunit methyltransferase H.